Consider the following 62-residue polypeptide: Short neurotoxin 2 (62 aa).

A disordered region spans residues 1 to 20 (MTCYNQQSSEAKTTTTCSGG). 4 disulfide bridges follow: Cys-3–Cys-24, Cys-17–Cys-41, Cys-43–Cys-54, and Cys-55–Cys-60.

This sequence belongs to the three-finger toxin family. Short-chain subfamily. Type I alpha-neurotoxin sub-subfamily. In terms of tissue distribution, expressed by the venom gland.

The protein localises to the secreted. Binds to muscle nicotinic acetylcholine receptor (nAChR) and inhibit acetylcholine from binding to the receptor, thereby impairing neuromuscular transmission. The sequence is that of Short neurotoxin 2 from Oxyuranus scutellatus scutellatus (Australian taipan).